Here is a 140-residue protein sequence, read N- to C-terminus: Ribosomal RNA large subunit methyltransferase H (140 aa).

Residues leucine 55 and glycine 87 each contribute to the S-adenosyl-L-methionine site.

It belongs to the RNA methyltransferase RlmH family. As to quaternary structure, homodimer.

The protein localises to the cytoplasm. The enzyme catalyses pseudouridine(1915) in 23S rRNA + S-adenosyl-L-methionine = N(3)-methylpseudouridine(1915) in 23S rRNA + S-adenosyl-L-homocysteine + H(+). Functionally, specifically methylates the pseudouridine at position 1915 (m3Psi1915) in 23S rRNA. This chain is Ribosomal RNA large subunit methyltransferase H, found in Erythrobacter litoralis (strain HTCC2594).